We begin with the raw amino-acid sequence, 500 residues long: Glucosylglycerol-phosphate synthase (500 aa).

Belongs to the glycosyltransferase 20 family.

The enzyme catalyses ADP-alpha-D-glucose + sn-glycerol 3-phosphate = 2-O-(alpha-D-glucopyranosyl)-sn-glycerol 3-phosphate + ADP + H(+). It participates in glycan metabolism; glucosylglycerol biosynthesis. Its function is as follows. Involved in salt tolerance by producing GG-phosphate from ADP-glucose and glycerol-3-phosphate (G3P), an intermediate in the synthesis of the osmolyte glucosylglycerol (GG). This is Glucosylglycerol-phosphate synthase (ggpS) from Picosynechococcus sp. (strain ATCC 27264 / PCC 7002 / PR-6) (Agmenellum quadruplicatum).